We begin with the raw amino-acid sequence, 528 residues long: Nucleoporin ASM4 (528 aa).

The stretch at 2-3 (FG) is one FG 1 repeat. The segment covering 23 to 50 (TTQMFQSQSQLQPQPQPQPQQQQQHLQF) has biased composition (low complexity). Disordered regions lie at residues 23-64 (TTQM…FGNS) and 88-144 (IKNG…SMNA). Composition is skewed to polar residues over residues 51 to 64 (NGSS…FGNS) and 97 to 108 (QHGQGNNPSWVN). Residues 61 to 62 (FG) form an FG 2 repeat. Residues 110-125 (PKKRFTPHTVIRRKTT) show a composition bias toward basic residues. Low complexity predominate over residues 127-141 (QNSSSDINQNDDSSS). FG repeat units follow at residues 195-196 (FG), 274-275 (FG), and 291-292 (FG). One can recognise an RRM Nup35-type domain in the interval 265-394 (SSSLSAIIVF…IPYSKNAVEQ (130 aa)). 2 positions are modified to phosphoserine: serine 458 and serine 464. Positions 490-510 (NLLRNLESKMRQQEAKYRNNE) form a coiled coil. Residues 523–524 (FG) form an FG 6 repeat.

As to quaternary structure, component of the nuclear pore complex (NPC). NPC constitutes the exclusive means of nucleocytoplasmic transport. NPCs allow the passive diffusion of ions and small molecules and the active, nuclear transport receptor-mediated bidirectional transport of macromolecules such as proteins, RNAs, ribonucleoparticles (RNPs), and ribosomal subunits across the nuclear envelope. Due to its 8-fold rotational symmetry, all subunits are present with 8 copies or multiples thereof. ASM4 may form a subcomplex with NUP53, NDC1, and NUP170. Phosphorylated by CDC28.

It is found in the nucleus. The protein resides in the nuclear pore complex. The protein localises to the nucleus membrane. In terms of biological role, functions as a component of the nuclear pore complex (NPC). NPC components, collectively referred to as nucleoporins (NUPs), can play the role of both NPC structural components and of docking or interaction partners for transiently associated nuclear transport factors. Active directional transport is assured by both, a Phe-Gly (FG) repeat affinity gradient for these transport factors across the NPC and a transport cofactor concentration gradient across the nuclear envelope (GSP1 and GSP2 GTPases associated predominantly with GTP in the nucleus, with GDP in the cytoplasm). May have a mitosis control function. In Saccharomyces cerevisiae (strain ATCC 204508 / S288c) (Baker's yeast), this protein is Nucleoporin ASM4 (ASM4).